The following is a 551-amino-acid chain: Probable NADH-ubiquinone oxidoreductase C947.15c, mitochondrial (551 aa).

The N-terminal 35 residues, 1–35 (MSVSKARLQSVVRLSRTVPYSKTMVRSFHVSCAVK), are a transit peptide targeting the mitochondrion. Residue 92–122 (NIVVLGSGWGAVAAIKNLDPSLYNITLVSPR) coordinates FAD. NAD(+) is bound at residue 255 to 291 (LHITVVGGGPTGMEFAAEMQDFIDNDVKDMFPELQKD).

It belongs to the NADH dehydrogenase family.

The protein resides in the mitochondrion. It catalyses the reaction a quinone + NADH + H(+) = a quinol + NAD(+). It carries out the reaction a ubiquinone + NADH + H(+) = a ubiquinol + NAD(+). Functionally, catalyzes the oxidation of NADH. The chain is Probable NADH-ubiquinone oxidoreductase C947.15c, mitochondrial from Schizosaccharomyces pombe (strain 972 / ATCC 24843) (Fission yeast).